A 163-amino-acid chain; its full sequence is Putative 4-hydroxy-4-methyl-2-oxoglutarate aldolase (163 aa).

Substrate-binding positions include 76–79 (GDMI) and Arg-98. Asp-99 contributes to the a divalent metal cation binding site.

This sequence belongs to the class II aldolase/RraA-like family. Homotrimer. Requires a divalent metal cation as cofactor.

It catalyses the reaction 4-hydroxy-4-methyl-2-oxoglutarate = 2 pyruvate. The enzyme catalyses oxaloacetate + H(+) = pyruvate + CO2. In terms of biological role, catalyzes the aldol cleavage of 4-hydroxy-4-methyl-2-oxoglutarate (HMG) into 2 molecules of pyruvate. Also contains a secondary oxaloacetate (OAA) decarboxylase activity due to the common pyruvate enolate transition state formed following C-C bond cleavage in the retro-aldol and decarboxylation reactions. The protein is Putative 4-hydroxy-4-methyl-2-oxoglutarate aldolase of Pseudomonas fluorescens (strain SBW25).